Here is a 147-residue protein sequence, read N- to C-terminus: Bis(5'-nucleosyl)-tetraphosphatase [asymmetrical] (147 aa).

Residue Ala2 is modified to N-acetylalanine. A Nudix hydrolase domain is found at 2-139 (ALRACGLIIF…EMKATLQEGH (138 aa)). The Nudix box signature appears at 43 to 64 (GHVDPGENDLETALRETQEETG).

It belongs to the Nudix hydrolase family. A divalent metal cation is required as a cofactor.

It catalyses the reaction P(1),P(4)-bis(5'-guanosyl) tetraphosphate + H2O = GMP + GTP + 2 H(+). The enzyme catalyses a 5'-end CoA-ribonucleoside in mRNA + H2O = a 5'-end phospho-adenosine-phospho-ribonucleoside in mRNA + (R)-4'-phosphopantetheine + 2 H(+). It carries out the reaction a 5'-end FAD-phospho-ribonucleoside in mRNA + H2O = a 5'-end phospho-adenosine-phospho-ribonucleoside in mRNA + FMN + 2 H(+). Catalyzes the asymmetric hydrolysis of diadenosine 5',5'''-P1,P4-tetraphosphate (Ap4A) to yield AMP and ATP. Exhibits decapping activity towards FAD-capped RNAs and dpCoA-capped RNAs in vitro. The protein is Bis(5'-nucleosyl)-tetraphosphatase [asymmetrical] (Nudt2) of Rattus norvegicus (Rat).